Here is a 651-residue protein sequence, read N- to C-terminus: DNA mismatch repair protein MutL (651 aa).

The interval Thr-383–Gln-405 is disordered.

The protein belongs to the DNA mismatch repair MutL/HexB family.

In terms of biological role, this protein is involved in the repair of mismatches in DNA. It is required for dam-dependent methyl-directed DNA mismatch repair. May act as a 'molecular matchmaker', a protein that promotes the formation of a stable complex between two or more DNA-binding proteins in an ATP-dependent manner without itself being part of a final effector complex. This Lacticaseibacillus casei (strain BL23) (Lactobacillus casei) protein is DNA mismatch repair protein MutL.